The chain runs to 549 residues: RNA-induced transcriptional silencing complex protein tas3 (549 aa).

Disordered stretches follow at residues 89 to 111 (KNSPAKAKATHTSSGVTKEVRAS), 126 to 184 (DGKE…SDSI), 202 to 225 (IRSSDSKSVGWDDNSTGFRESSKS), 298 to 361 (LDNF…HLEK), and 381 to 430 (AHFH…PLAS). Residues 298–307 (LDNFNRPSQQ) show a composition bias toward polar residues. 2 stretches are compositionally biased toward basic and acidic residues: residues 328–361 (YDSYHPDSRSDSYRSKREHYDNRDTGPRSKHLEK) and 403–416 (SDRQRESRENELPT). Over residues 419 to 430 (LNASDSHNPLAS) the composition is skewed to polar residues.

Ago1, chp1 and tas3 interact to form the core of the RNA-induced transcriptional silencing (RITS) complex. The RITS complex interacts with the RDRC complex via interaction between ago1 and hrr1. Clr4 has a role in mediating this interaction.

Its subcellular location is the nucleus. It is found in the cytoplasm. The protein resides in the cytoskeleton. The protein localises to the microtubule organizing center. It localises to the spindle pole body. Has a role in the RNA interference (RNAi) pathway which is important for heterochromatin formation and accurate chromosome segregation. A member of the RNA-induced transcriptional silencing (RITS) complex which is involved in the biosynthesis of dsRNA from primer siRNAs provided by the RNA-directed RNA polymerase (RDRC) complex. This is RNA-induced transcriptional silencing complex protein tas3 (tas3) from Schizosaccharomyces pombe (strain 972 / ATCC 24843) (Fission yeast).